We begin with the raw amino-acid sequence, 273 residues long: HMP-PP phosphatase (273 aa).

Asp8 serves as the catalytic Nucleophile. Residues Asp8, Asp10, and Asp212 each coordinate Mg(2+).

The protein belongs to the HAD-like hydrolase superfamily. Cof family. Requires Mg(2+) as cofactor.

The catalysed reaction is 4-amino-2-methyl-5-(diphosphooxymethyl)pyrimidine + H2O = 4-amino-2-methyl-5-(phosphooxymethyl)pyrimidine + phosphate + H(+). In terms of biological role, catalyzes the hydrolysis of 4-amino-2-methyl-5-hydroxymethylpyrimidine pyrophosphate (HMP-PP) to 4-amino-2-methyl-5-hydroxymethylpyrimidine phosphate (HMP-P). The sequence is that of HMP-PP phosphatase from Yersinia pestis bv. Antiqua (strain Antiqua).